Reading from the N-terminus, the 95-residue chain is Protein TusB (95 aa).

Belongs to the DsrH/TusB family. Heterohexamer, formed by a dimer of trimers. The hexameric TusBCD complex contains 2 copies each of TusB, TusC and TusD. The TusBCD complex interacts with TusE.

The protein localises to the cytoplasm. Its function is as follows. Part of a sulfur-relay system required for 2-thiolation of 5-methylaminomethyl-2-thiouridine (mnm(5)s(2)U) at tRNA wobble positions. The chain is Protein TusB from Shigella dysenteriae serotype 1 (strain Sd197).